A 432-amino-acid polypeptide reads, in one-letter code: Adenosylhomocysteinase (432 aa).

The residue at position 2 (Ser2) is an N-acetylserine. Positions 57, 131, and 156 each coordinate substrate. At Ser183 the chain carries Phosphoserine. Residues 183–350 (SVTKSKFDNL…EGRLVNLGCA (168 aa)) form an NAD binding region. Substrate contacts are provided by Lys186 and Asp190. Lys186 is subject to N6-(2-hydroxyisobutyryl)lysine. Tyr193 carries the post-translational modification Phosphotyrosine.

It belongs to the adenosylhomocysteinase family. As to quaternary structure, homotetramer. Interaction with AHCYL1. NAD(+) serves as cofactor.

The protein resides in the cytoplasm. It localises to the melanosome. Its subcellular location is the nucleus. It is found in the endoplasmic reticulum. The catalysed reaction is S-adenosyl-L-homocysteine + H2O = L-homocysteine + adenosine. It functions in the pathway amino-acid biosynthesis; L-homocysteine biosynthesis; L-homocysteine from S-adenosyl-L-homocysteine: step 1/1. In terms of biological role, catalyzes the hydrolysis of S-adenosyl-L-homocysteine to form adenosine and homocysteine. Binds copper ions. This chain is Adenosylhomocysteinase (AHCY), found in Sus scrofa (Pig).